A 1199-amino-acid chain; its full sequence is MVRLLLIFFPMIFLEMSILPRMPDRKVLLAGASSQRSVARMDGDVIIGALFSVHHQPPAEKVPERKCGEIREQYGIQRVEAMFHTLDKINADPVLLPNITLGSEIRDSCWHSSVALEQSIEFIRDSLISIRDEKDGLNRCLPDGQTLPPGRTKKPIAGVIGPGSSSVAIQVQNLLQLFDIPQIAYSATSIDLSDKTLYKYFLRVVPSDTLQARAMLDIVKRYNWTYVSAVHTEGNYGESGMDAFKELAAQEGLCIAHSDKIYSNAGEKSFDRLLRKLRERLPKARVVVCFCEGMTVRGLLSAMRRLGVVGEFSLIGSDGWADRDEVIEGYEVEANGGITIKLQSPEVRSFDDYFLKLRLDTNTRNPWFPEFWQHRFQCRLPGHLLENPNFKKVCTGNESLEENYVQDSKMGFVINAIYAMAHGLQNMHHALCPGHVGLCDAMKPIDGRKLLDFLIKSSFVGVSGEEVWFDEKGDAPGRYDIMNLQYTEANRYDYVHVGTWHEGVLNIDDYKIQMNKSGMVRSVCSEPCLKGQIKVIRKGEVSCCWICTACKENEFVQDEFTCRACDLGWWPNAELTGCEPIPVRYLEWSDIESIIAIAFSCLGILVTLFVTLIFVLYRDTPVVKSSSRELCYIILAGIFLGYVCPFTLIAKPTTTSCYLQRLLVGLSSAMCYSALVTKTNRIARILAGSKKKICTRKPRFMSAWAQVIIASILISVQLTLVVTLIIMEPPMPILSYPSIKEVYLICNTSNLGVVAPVGYNGLLIMSCTYYAFKTRNVPANFNEAKYIAFTMYTTCIIWLAFVPIYFGSNYKIITTCFAVSLSVTVALGCMFTPKMYIIIAKPERNVRSAFTTSDVVRMHVGDGKLPCRSNTFLNIFRRKKPGAGNANSNGKSVSWSEPGGRQAPKGQHVWQRLSVHVKTNETACNQTAVIKPLTKSYQGSGKSLTFSDASTKTLYNVEEEDNTPSAHFSPPSSPSMVVHRRGPPVATTPPLPPHLTAEETPLFLADSVIPKGLPPPLPQQQPQQPPPQQPPQQPKSLMDQLQGVVTNFGSGIPDFHAVLAGPGTPGNSLRSLYPPPPPPQHLQMLPLHLSTFQEESISPPGEDIDDDSERFKLLQEFVYEREGNTEEDELEEEEDLPTASKLTPEDSPALTPPSPFRDSVASGSSVPSSPVSESVLCTPPNVTYASVILRDYKQSSSTL.

The N-terminal stretch at Met-1–Ile-18 is a signal peptide. The Extracellular portion of the chain corresponds to Leu-19–Glu-592. Cys-67 and Cys-109 are disulfide-bonded. Tyr-74 serves as a coordination point for L-glutamate. N-linked (GlcNAc...) asparagine glycosylation occurs at Asn-98. L-glutamate contacts are provided by residues Ser-165 and Ser-186 to Thr-188. A glycan (N-linked (GlcNAc...) asparagine) is linked at Asn-223. Tyr-236 is a binding site for L-glutamate. A disulfide bond links Cys-289 and Cys-291. Asp-318 is a binding site for L-glutamate. A disulfide bridge connects residues Cys-378 and Cys-394. Residue Asn-397 is glycosylated (N-linked (GlcNAc...) asparagine). Residue Lys-409 participates in L-glutamate binding. A disulfide bridge links Cys-432 with Cys-439. An N-linked (GlcNAc...) asparagine glycan is attached at Asn-515. A helical membrane pass occupies residues Ser-593–Val-615. Residues Leu-616–Glu-629 are Cytoplasmic-facing. A helical membrane pass occupies residues Leu-630 to Ala-650. The Extracellular segment spans residues Lys-651–Tyr-658. A disulfide bond links Cys-657 and Cys-746. The helical transmembrane segment at Leu-659–Asn-680 threads the bilayer. The Cytoplasmic portion of the chain corresponds to Arg-681–Ala-703. Residues Trp-704–Met-727 form a helical membrane-spanning segment. Residues Glu-728 to Asn-750 are Extracellular-facing. Residues Leu-751–Phe-772 form a helical membrane-spanning segment. Residues Lys-773–Lys-785 are Cytoplasmic-facing. The helical transmembrane segment at Tyr-786 to Gly-807 threads the bilayer. The Extracellular segment spans residues Ser-808 to Thr-815. A helical membrane pass occupies residues Cys-816 to Ala-840. Topologically, residues Lys-841–Leu-1199 are cytoplasmic. Ser-853 carries the phosphoserine modification. Thr-871 is modified (phosphothreonine). Disordered regions lie at residues Gly-882–Lys-905, Glu-959–Ser-1036, and His-1056–His-1081. A compositionally biased stretch (polar residues) spans Asn-885–Trp-895. Phosphoserine occurs at positions 894 and 969. Pro residues predominate over residues Gly-1012–Gln-1033. The residue at position 1098 (Ser-1098) is a Phosphoserine. The segment at Glu-1120–Cys-1177 is disordered. A compositionally biased stretch (acidic residues) spans Thr-1125–Leu-1136. Ser-1147 is modified (phosphoserine). Thr-1151 is modified (phosphothreonine). Ser-1154 is modified (phosphoserine). The segment covering Ser-1159 to Val-1175 has biased composition (low complexity).

It belongs to the G-protein coupled receptor 3 family. As to quaternary structure, homodimer; disulfide-linked. The PPXXF motif binds HOMER1, HOMER2 and HOMER3. Interacts with TAMALIN. Interacts with RYR1, RYR2, ITPR1, SHANK1 and SHANK3. Interacts with SIAH1. Predominantly expressed in cerebellar Purkinje cells, CA2-CA3 pyramidal cells of the hippocampus, and mitral and tufted cells of the olfactory bulb.

The protein resides in the cell membrane. The protein localises to the postsynaptic cell membrane. It is found in the cell projection. It localises to the dendrite. Functionally, G-protein coupled receptor for glutamate. Ligand binding causes a conformation change that triggers signaling via guanine nucleotide-binding proteins (G proteins) and modulates the activity of down-stream effectors. Signaling activates a phosphatidylinositol-calcium second messenger system. May participate in the central action of glutamate in the CNS, such as long-term potentiation in the hippocampus and long-term depression in the cerebellum. May function in the light response in the retina. Induces GRID1 and GRID2 cation-channel activation via GNAQ-PLC-PKC pathway in dopaminergic neurons and cerebellar Purkinje cell, respectively. In Rattus norvegicus (Rat), this protein is Metabotropic glutamate receptor 1 (Grm1).